The chain runs to 92 residues: MAKGQSLQDPFLNALRRERVPVSVYLVNGIKLQGTIESFDQFVVLLRNTVSQMVYKHAISTVVPARNVRVGPGGGYVHSGSDTLQINDDEVE.

In terms of domain architecture, Sm spans 9–68 (DPFLNALRRERVPVSVYLVNGIKLQGTIESFDQFVVLLRNTVSQMVYKHAISTVVPARNV).

This sequence belongs to the Hfq family. In terms of assembly, homohexamer.

In terms of biological role, RNA chaperone that binds small regulatory RNA (sRNAs) and mRNAs to facilitate mRNA translational regulation in response to envelope stress, environmental stress and changes in metabolite concentrations. Also binds with high specificity to tRNAs. The chain is RNA-binding protein Hfq from Xylella fastidiosa (strain M12).